The primary structure comprises 213 residues: Cytochrome c biogenesis ATP-binding export protein CcmA (213 aa).

One can recognise an ABC transporter domain in the interval 7–213 (LKTKKLACQR…VRLENYKFTE (207 aa)). 39 to 46 (GHNGIGKT) is a binding site for ATP.

Belongs to the ABC transporter superfamily. CcmA exporter (TC 3.A.1.107) family. The complex is composed of two ATP-binding proteins (CcmA) and two transmembrane proteins (CcmB).

Its subcellular location is the cell inner membrane. The catalysed reaction is heme b(in) + ATP + H2O = heme b(out) + ADP + phosphate + H(+). In terms of biological role, part of the ABC transporter complex CcmAB involved in the biogenesis of c-type cytochromes; once thought to export heme, this seems not to be the case, but its exact role is uncertain. Responsible for energy coupling to the transport system. The polypeptide is Cytochrome c biogenesis ATP-binding export protein CcmA (Pasteurella multocida (strain Pm70)).